The chain runs to 396 residues: Bone morphogenetic protein 2 (396 aa).

An N-terminal signal peptide occupies residues 1-23 (MVAGTRCLLALLLPQVLLGGAAG). A propeptide spans 24 to 282 (LIPELGRRKF…GHPLHRREKR (259 aa)) (cleaved by PCSK5). At serine 87 the chain carries Phosphoserine. N-linked (GlcNAc...) asparagine glycosylation is found at asparagine 135, asparagine 163, asparagine 164, and asparagine 200. The segment at 272 to 293 (KGHPLHRREKRQAKHKQRKRLK) is disordered. Residues 274-293 (HPLHRREKRQAKHKQRKRLK) show a composition bias toward basic residues. 3 cysteine pairs are disulfide-bonded: cysteine 296/cysteine 361, cysteine 325/cysteine 393, and cysteine 329/cysteine 395. N-linked (GlcNAc...) asparagine glycosylation occurs at asparagine 338.

Belongs to the TGF-beta family. In terms of assembly, homodimer; disulfide-linked. Interacts with SOSTDC1. Interacts with GREM2, RGMA, RGMB and RGMC. Interacts with ASPN. Interacts with MAFP5. Interacts with FBN1 (via N-terminal domain) and FBN2. Interacts with type I receptor BMPR1A. Interacts with type II receptor BMPR2. Interacts with ERFE. Interacts with BMPR1A/ALK3; the interaction may induce HAMP expression. Interacts with TGFBR3.

It is found in the secreted. Growth factor of the TGF-beta superfamily that plays essential roles in many developmental processes, including cardiogenesis, neurogenesis, and osteogenesis. Induces cartilage and bone formation. Initiates the canonical BMP signaling cascade by associating with type I receptor BMPR1A and type II receptor BMPR2. Once all three components are bound together in a complex at the cell surface, BMPR2 phosphorylates and activates BMPR1A. In turn, BMPR1A propagates signal by phosphorylating SMAD1/5/8 that travel to the nucleus and act as activators and repressors of transcription of target genes. Also acts to promote expression of HAMP, via the interaction with its receptor BMPR1A/ALK3. Can also signal through non-canonical pathways such as ERK/MAP kinase signaling cascade that regulates osteoblast differentiation. Also stimulates the differentiation of myoblasts into osteoblasts via the EIF2AK3-EIF2A-ATF4 pathway by stimulating EIF2A phosphorylation which leads to increased expression of ATF4 which plays a central role in osteoblast differentiation. Acts as a positive regulator of odontoblast differentiation during mesenchymal tooth germ formation, expression is repressed during the bell stage by MSX1-mediated inhibition of CTNNB1 signaling. In Dama dama (Fallow deer), this protein is Bone morphogenetic protein 2 (BMP2).